Here is a 946-residue protein sequence, read N- to C-terminus: Leucine--tRNA ligase (946 aa).

The 'HIGH' region motif lies at 40-51 (PYPSGAGLHVGH). The 'KMSKS' region signature appears at 719 to 723 (KMSKS). Residue Lys722 coordinates ATP.

It belongs to the class-I aminoacyl-tRNA synthetase family.

It is found in the cytoplasm. It carries out the reaction tRNA(Leu) + L-leucine + ATP = L-leucyl-tRNA(Leu) + AMP + diphosphate. In Parabacteroides distasonis (strain ATCC 8503 / DSM 20701 / CIP 104284 / JCM 5825 / NCTC 11152), this protein is Leucine--tRNA ligase.